The primary structure comprises 174 residues: RNA pyrophosphohydrolase (174 aa).

One can recognise a Nudix hydrolase domain in the interval 6 to 149; the sequence is GFRANVGIII…KRDVYRKVMK (144 aa). Residues 38–59 carry the Nudix box motif; the sequence is GGVDDGESAEEAMYRELYEEVG.

It belongs to the Nudix hydrolase family. RppH subfamily. A divalent metal cation is required as a cofactor.

Its function is as follows. Accelerates the degradation of transcripts by removing pyrophosphate from the 5'-end of triphosphorylated RNA, leading to a more labile monophosphorylated state that can stimulate subsequent ribonuclease cleavage. This is RNA pyrophosphohydrolase from Shewanella sp. (strain W3-18-1).